A 108-amino-acid chain; its full sequence is UPF0145 protein AF_0869 (108 aa).

The protein belongs to the UPF0145 family.

This chain is UPF0145 protein AF_0869, found in Archaeoglobus fulgidus (strain ATCC 49558 / DSM 4304 / JCM 9628 / NBRC 100126 / VC-16).